The following is a 309-amino-acid chain: Probable manganese-dependent inorganic pyrophosphatase (309 aa).

Positions 9, 13, 15, 75, 97, and 149 each coordinate Mn(2+).

Belongs to the PPase class C family. The cofactor is Mn(2+).

The protein resides in the cytoplasm. The catalysed reaction is diphosphate + H2O = 2 phosphate + H(+). In Lactiplantibacillus plantarum (strain ATCC BAA-793 / NCIMB 8826 / WCFS1) (Lactobacillus plantarum), this protein is Probable manganese-dependent inorganic pyrophosphatase.